The chain runs to 319 residues: Quinolinate synthase (319 aa).

The iminosuccinate site is built by His35 and Ser52. Cys97 provides a ligand contact to [4Fe-4S] cluster. Iminosuccinate-binding positions include 123 to 125 (YIN) and Ser140. A [4Fe-4S] cluster-binding site is contributed by Cys183. Iminosuccinate is bound by residues 209–211 (HPE) and Thr226. [4Fe-4S] cluster is bound at residue Cys276.

The protein belongs to the quinolinate synthase family. Type 2 subfamily. Requires [4Fe-4S] cluster as cofactor.

The protein resides in the cytoplasm. It carries out the reaction iminosuccinate + dihydroxyacetone phosphate = quinolinate + phosphate + 2 H2O + H(+). Its pathway is cofactor biosynthesis; NAD(+) biosynthesis; quinolinate from iminoaspartate: step 1/1. Catalyzes the condensation of iminoaspartate with dihydroxyacetone phosphate to form quinolinate. The polypeptide is Quinolinate synthase (Microcystis aeruginosa (strain NIES-843 / IAM M-2473)).